Reading from the N-terminus, the 166-residue chain is NAD(P)H-quinone oxidoreductase subunit I, chloroplastic (166 aa).

4Fe-4S ferredoxin-type domains lie at 55–84 (GRIH…VDWK) and 95–124 (LNYS…MTEE). Positions 64, 67, 70, 74, 104, 107, 110, and 114 each coordinate [4Fe-4S] cluster.

This sequence belongs to the complex I 23 kDa subunit family. As to quaternary structure, NDH is composed of at least 16 different subunits, 5 of which are encoded in the nucleus. Requires [4Fe-4S] cluster as cofactor.

The protein resides in the plastid. It localises to the chloroplast thylakoid membrane. The enzyme catalyses a plastoquinone + NADH + (n+1) H(+)(in) = a plastoquinol + NAD(+) + n H(+)(out). The catalysed reaction is a plastoquinone + NADPH + (n+1) H(+)(in) = a plastoquinol + NADP(+) + n H(+)(out). NDH shuttles electrons from NAD(P)H:plastoquinone, via FMN and iron-sulfur (Fe-S) centers, to quinones in the photosynthetic chain and possibly in a chloroplast respiratory chain. The immediate electron acceptor for the enzyme in this species is believed to be plastoquinone. Couples the redox reaction to proton translocation, and thus conserves the redox energy in a proton gradient. The polypeptide is NAD(P)H-quinone oxidoreductase subunit I, chloroplastic (Acanthospermum australe (Paraguayan starburr)).